The following is a 174-amino-acid chain: Peptide deformylase (174 aa).

Positions 91 and 133 each coordinate Fe cation. E134 is a catalytic residue. A Fe cation-binding site is contributed by H137.

Belongs to the polypeptide deformylase family. Fe(2+) is required as a cofactor.

The catalysed reaction is N-terminal N-formyl-L-methionyl-[peptide] + H2O = N-terminal L-methionyl-[peptide] + formate. Functionally, removes the formyl group from the N-terminal Met of newly synthesized proteins. Requires at least a dipeptide for an efficient rate of reaction. N-terminal L-methionine is a prerequisite for activity but the enzyme has broad specificity at other positions. This is Peptide deformylase from Fusobacterium nucleatum subsp. nucleatum (strain ATCC 25586 / DSM 15643 / BCRC 10681 / CIP 101130 / JCM 8532 / KCTC 2640 / LMG 13131 / VPI 4355).